A 118-amino-acid polypeptide reads, in one-letter code: uncharacterized protein (118 aa).

2 consecutive transmembrane segments (helical) span residues 5-25 (AFFNLIACVLFPTPLIPSMVI) and 40-57 (FLTFLTNLFLYNIVQHYI).

It is found in the membrane. This is an uncharacterized protein from African swine fever virus (strain Badajoz 1971 Vero-adapted) (Ba71V).